We begin with the raw amino-acid sequence, 95 residues long: Small ribosomal subunit protein uS19 (95 aa).

The protein belongs to the universal ribosomal protein uS19 family.

Its function is as follows. Protein S19 forms a complex with S13 that binds strongly to the 16S ribosomal RNA. The protein is Small ribosomal subunit protein uS19 of Lactobacillus gasseri (strain ATCC 33323 / DSM 20243 / BCRC 14619 / CIP 102991 / JCM 1131 / KCTC 3163 / NCIMB 11718 / NCTC 13722 / AM63).